The chain runs to 515 residues: Probable coatomer subunit delta (515 aa).

Positions 161–180 (AKQAMAEKAKELKRAQKEAL) are enriched in basic and acidic residues. Residues 161 to 231 (AKQAMAEKAK…GGKALKLGGK (71 aa)) are disordered. Positions 187–198 (SYQSSTGISSSS) are enriched in low complexity. Residues 276-515 (REVVHVRTEE…TFNSENFEIV (240 aa)) enclose the MHD domain.

It belongs to the adaptor complexes medium subunit family. Delta-COP subfamily. As to quaternary structure, oligomeric complex that consists of at least the alpha, beta, beta', gamma, delta, epsilon and zeta subunits.

Its subcellular location is the cytoplasm. The protein resides in the golgi apparatus membrane. It is found in the cytoplasmic vesicle. It localises to the COPI-coated vesicle membrane. Functionally, the coatomer is a cytosolic protein complex that binds to dilysine motifs and reversibly associates with Golgi non-clathrin-coated vesicles, which further mediate biosynthetic protein transport from the ER, via the Golgi up to the trans Golgi network. Coatomer complex is required for budding from Golgi membranes, and is essential for the retrograde Golgi-to-ER transport of dilysine-tagged proteins. The sequence is that of Probable coatomer subunit delta from Caenorhabditis elegans.